Here is a 155-residue protein sequence, read N- to C-terminus: Putative pre-16S rRNA nuclease (155 aa).

The protein belongs to the YqgF nuclease family.

The protein localises to the cytoplasm. In terms of biological role, could be a nuclease involved in processing of the 5'-end of pre-16S rRNA. The sequence is that of Putative pre-16S rRNA nuclease from Novosphingobium aromaticivorans (strain ATCC 700278 / DSM 12444 / CCUG 56034 / CIP 105152 / NBRC 16084 / F199).